We begin with the raw amino-acid sequence, 141 residues long: MAKKVTAVIKLALQAGKANPAPPVGPALGQHGVNIMAFCKEYNARTQDKAGFVIPVEISVFEDRSFTFITKTPPASVLITKAAGIEKGSGESAKGSVGSIKRSQLEEIAKTKLPDLNCTSIESAMRIIEGTARNMGVAITD.

It belongs to the universal ribosomal protein uL11 family. As to quaternary structure, part of the ribosomal stalk of the 50S ribosomal subunit. Interacts with L10 and the large rRNA to form the base of the stalk. L10 forms an elongated spine to which L12 dimers bind in a sequential fashion forming a multimeric L10(L12)X complex. Post-translationally, one or more lysine residues are methylated.

In terms of biological role, forms part of the ribosomal stalk which helps the ribosome interact with GTP-bound translation factors. The protein is Large ribosomal subunit protein uL11 of Synechococcus sp. (strain WH7803).